The sequence spans 264 residues: uncharacterized protein (264 aa).

An N-terminal signal peptide occupies residues 1-22 (MGYLKKLALFISVIILGIFIIG). Cysteine 23 carries N-palmitoyl cysteine lipidation. A lipid anchor (S-diacylglycerol cysteine) is attached at cysteine 23.

Belongs to the staphylococcal tandem lipoprotein family.

Its subcellular location is the cell membrane. This is an uncharacterized protein from Staphylococcus aureus (strain N315).